Reading from the N-terminus, the 436-residue chain is O-phosphoseryl-tRNA(Sec) selenium transferase (436 aa).

Residues 1–44 are tetramerization; sequence MLDFNIEGLIPKNMEKRGELVLNEYLKEIEDVFNHRKIPENGID. Position 72 (Arg72) interacts with pyridoxal 5'-phosphate. Residues 93-103 are phosphate loop (P-loop); the sequence is GRSGNLVDPQP. Residues Arg94, Ser95, and Gln102 each coordinate substrate. Residue Lys278 is modified to N6-(pyridoxal phosphate)lysine. A substrate-binding site is contributed by Arg307.

It belongs to the SepSecS family. In terms of assembly, homotetramer. Pyridoxal 5'-phosphate is required as a cofactor.

It catalyses the reaction O-phospho-L-seryl-tRNA(Sec) + selenophosphate + H2O = L-selenocysteinyl-tRNA(Sec) + 2 phosphate. It participates in aminoacyl-tRNA biosynthesis; selenocysteinyl-tRNA(Sec) biosynthesis; selenocysteinyl-tRNA(Sec) from L-seryl-tRNA(Sec) (archaeal/eukaryal route): step 2/2. In terms of biological role, converts O-phosphoseryl-tRNA(Sec) to selenocysteinyl-tRNA(Sec) required for selenoprotein biosynthesis. This Methanococcus maripaludis (strain DSM 14266 / JCM 13030 / NBRC 101832 / S2 / LL) protein is O-phosphoseryl-tRNA(Sec) selenium transferase (spcS).